Here is a 300-residue protein sequence, read N- to C-terminus: Acetylglutamate kinase (300 aa).

Substrate is bound by residues 73–74, Arg-95, and Asn-197; that span reads GG.

The protein belongs to the acetylglutamate kinase family. ArgB subfamily.

The protein localises to the cytoplasm. The enzyme catalyses N-acetyl-L-glutamate + ATP = N-acetyl-L-glutamyl 5-phosphate + ADP. It functions in the pathway amino-acid biosynthesis; L-arginine biosynthesis; N(2)-acetyl-L-ornithine from L-glutamate: step 2/4. Functionally, catalyzes the ATP-dependent phosphorylation of N-acetyl-L-glutamate. The protein is Acetylglutamate kinase of Bordetella avium (strain 197N).